Reading from the N-terminus, the 578-residue chain is Galectin-3-binding protein (578 aa).

Residues 1 to 18 (MAFLWLFSLWLLVPGTQG) form the signal peptide. The SRCR domain occupies 24 to 124 (MRLVNGASAN…HEKDAGVVCS (101 aa)). 3 disulfide bridges follow: C49–C113, C62–C123, and C93–C103. Residues N69 and N102 are each glycosylated (N-linked (GlcNAc...) asparagine). In terms of domain architecture, BTB spans 153-221 (CDLFIQVTGQ…FYSRRIEVTM (69 aa)). Residues 260–360 (PLELYAYAQA…VLPQELFELQ (101 aa)) enclose the BACK domain. N-linked (GlcNAc...) asparagine glycans are attached at residues N362 and N398.

In terms of assembly, homodimers and homomultimers. The multimers form ring-like structures with a diameter of 30-40 nm. Binds LGALS1 and LGALS3. Binds ITGB1, COL4A1, COL5A1, COL6A1, FN1 and NID. The unglycosylated form interacts with PDE4DIP; this interaction, which is PDE4DIP isoform-specific, may connect a pericentrosomal complex to the gamma-tubulin ring complex (gamma-TuRC) to promote microtubule assembly and acetylation.

It localises to the secreted. The protein resides in the extracellular space. The protein localises to the extracellular matrix. Its function is as follows. Promotes integrin-mediated cell adhesion. May stimulate host defense against viruses and tumor cells. The sequence is that of Galectin-3-binding protein (LGALS3BP) from Mesocricetus auratus (Golden hamster).